A 348-amino-acid chain; its full sequence is Selenide, water dikinase (348 aa).

Residue selenocysteine 17 is part of the active site. Selenocysteine 17 is a non-standard amino acid (selenocysteine). ATP is bound by residues lysine 20 and 48-50 (TAD). Aspartate 51 serves as a coordination point for Mg(2+). ATP-binding positions include aspartate 68, aspartate 91, and 138 to 140 (GHT). Position 91 (aspartate 91) interacts with Mg(2+). Aspartate 226 contacts Mg(2+).

Belongs to the selenophosphate synthase 1 family. Class I subfamily. In terms of assembly, homodimer. Mg(2+) is required as a cofactor.

The catalysed reaction is hydrogenselenide + ATP + H2O = selenophosphate + AMP + phosphate + 2 H(+). Its function is as follows. Synthesizes selenophosphate from selenide and ATP. The chain is Selenide, water dikinase from Clostridioides difficile (strain 630) (Peptoclostridium difficile).